The following is a 325-amino-acid chain: Delta(1)-pyrroline-2-carboxylate reductase (325 aa).

Belongs to the ornithine cyclodeaminase/mu-crystallin family.

The catalysed reaction is L-proline + NAD(+) = 1-pyrroline-2-carboxylate + NADH + H(+). It catalyses the reaction L-proline + NADP(+) = 1-pyrroline-2-carboxylate + NADPH + H(+). Functionally, catalyzes the reduction of Delta(1)-pyrroline-2-carboxylate (Pyr2C) to L-proline, using preferentially NADPH over NADH as the electron donor. Is likely involved in a degradation pathway that converts trans-3-hydroxy-L-proline (t3LHyp) to L-proline. This is Delta(1)-pyrroline-2-carboxylate reductase from Bacillus cereus (strain ATCC 10987 / NRS 248).